A 391-amino-acid polypeptide reads, in one-letter code: Casein kinase II subunit alpha (391 aa).

An interaction with beta subunit region spans residues 36–41 (QDDYQL). In terms of domain architecture, Protein kinase spans 39-324 (YQLVRKLGRG…AREAMEHPYF (286 aa)). Residues 45–53 (LGRGKYSEV) and Lys68 each bind ATP. Catalysis depends on Asp156, which acts as the Proton acceptor. Thr344 and Thr360 each carry phosphothreonine; by CDK1. Phosphoserine; by CDK1 occurs at positions 362 and 370.

The protein belongs to the protein kinase superfamily. Ser/Thr protein kinase family. CK2 subfamily. As to quaternary structure, heterotetramer composed of two catalytic subunits (alpha chain and/or alpha' chain) and two regulatory subunits (beta chains). The tetramer can exist as a combination of 2 alpha/2 beta, 2 alpha'/2 beta or 1 alpha/1 alpha'/2 beta subunits. Also part of a CK2-SPT16-SSRP1 complex composed of SSRP1, SUPT16H, CSNK2A1, CSNK2A2 and CSNK2B, which forms following UV irradiation. Interacts with RNPS1. Interacts with SNAI1. Interacts with PML. Interacts with CCAR2. Interacts with HIRIP3. Post-translationally, phosphorylated at Thr-344, Thr-360, Ser-362 and Ser-370 by CDK1 in prophase and metaphase and dephosphorylated during anaphase. Phosphorylation does not directly affect casein kinase 2 activity, but may contribute to its regulation by forming binding sites for interacting proteins and/or targeting it to different compartments.

It is found in the nucleus. It carries out the reaction L-seryl-[protein] + ATP = O-phospho-L-seryl-[protein] + ADP + H(+). It catalyses the reaction L-threonyl-[protein] + ATP = O-phospho-L-threonyl-[protein] + ADP + H(+). Its activity is regulated as follows. Constitutively active protein kinase whose activity is not directly affected by phosphorylation. Seems to be regulated by level of expression and localization. In terms of biological role, catalytic subunit of a constitutively active serine/threonine-protein kinase complex that phosphorylates a large number of substrates containing acidic residues C-terminal to the phosphorylated serine or threonine. Regulates numerous cellular processes, such as cell cycle progression, apoptosis and transcription, as well as viral infection. May act as a regulatory node which integrates and coordinates numerous signals leading to an appropriate cellular response. During mitosis, functions as a component of the p53/TP53-dependent spindle assembly checkpoint (SAC) that maintains cyclin-B-CDK1 activity and G2 arrest in response to spindle damage. Also required for p53/TP53-mediated apoptosis, phosphorylating 'Ser-392' of p53/TP53 following UV irradiation. Phosphorylates a number of DNA repair proteins in response to DNA damage, such as MDC1, MRE11, RAD9A, RAD51 and HTATSF1, promoting their recruitment to DNA damage sites. Can also negatively regulate apoptosis. Phosphorylates the caspases CASP9 and CASP2 and the apoptotic regulator NOL3. Phosphorylation protects CASP9 from cleavage and activation by CASP8, and inhibits the dimerization of CASP2 and activation of CASP8. Phosphorylates YY1, protecting YY1 from cleavage by CASP7 during apoptosis. Regulates transcription by direct phosphorylation of RNA polymerases I, II, III and IV. Also phosphorylates and regulates numerous transcription factors including NF-kappa-B, STAT1, CREB1, IRF1, IRF2, ATF1, ATF4, SRF, MAX, JUN, FOS, MYC and MYB. Phosphorylates Hsp90 and its co-chaperones FKBP4 and CDC37, which is essential for chaperone function. Mediates sequential phosphorylation of FNIP1, promoting its gradual interaction with Hsp90, leading to activate both kinase and non-kinase client proteins of Hsp90. Regulates Wnt signaling by phosphorylating CTNNB1 and the transcription factor LEF1. Acts as an ectokinase that phosphorylates several extracellular proteins. Phosphorylates PML at 'Ser-565' and primes it for ubiquitin-mediated degradation. Plays an important role in the circadian clock function by phosphorylating BMAL1 at 'Ser-90' which is pivotal for its interaction with CLOCK and which controls CLOCK nuclear entry. Phosphorylates FMR1, promoting FMR1-dependent formation of a membraneless compartment. May phosphorylate histone H2A on 'Ser-1'. The protein is Casein kinase II subunit alpha (Csnk2a1) of Rattus norvegicus (Rat).